A 56-amino-acid chain; its full sequence is Small ribosomal subunit protein uS14 (56 aa).

Residues C21, C24, C39, and C42 each contribute to the Zn(2+) site.

Belongs to the universal ribosomal protein uS14 family. As to quaternary structure, component of the 40S small ribosomal subunit. The cofactor is Zn(2+).

The protein localises to the cytoplasm. It localises to the cytosol. It is found in the rough endoplasmic reticulum. In Ixodes scapularis (Black-legged tick), this protein is Small ribosomal subunit protein uS14 (RpS29).